A 219-amino-acid chain; its full sequence is Probable nicotinate-nucleotide adenylyltransferase (219 aa).

This sequence belongs to the NadD family.

The enzyme catalyses nicotinate beta-D-ribonucleotide + ATP + H(+) = deamido-NAD(+) + diphosphate. The protein operates within cofactor biosynthesis; NAD(+) biosynthesis; deamido-NAD(+) from nicotinate D-ribonucleotide: step 1/1. Functionally, catalyzes the reversible adenylation of nicotinate mononucleotide (NaMN) to nicotinic acid adenine dinucleotide (NaAD). The sequence is that of Probable nicotinate-nucleotide adenylyltransferase from Pseudomonas putida (strain W619).